Here is a 620-residue protein sequence, read N- to C-terminus: 1-deoxy-D-xylulose-5-phosphate synthase (620 aa).

Thiamine diphosphate-binding positions include H80 and 121 to 123 (GHS). D152 is a binding site for Mg(2+). Residues 153-154 (GA), N181, Y288, and E370 each bind thiamine diphosphate. N181 serves as a coordination point for Mg(2+).

The protein belongs to the transketolase family. DXPS subfamily. In terms of assembly, homodimer. Mg(2+) is required as a cofactor. The cofactor is thiamine diphosphate.

The catalysed reaction is D-glyceraldehyde 3-phosphate + pyruvate + H(+) = 1-deoxy-D-xylulose 5-phosphate + CO2. It participates in metabolic intermediate biosynthesis; 1-deoxy-D-xylulose 5-phosphate biosynthesis; 1-deoxy-D-xylulose 5-phosphate from D-glyceraldehyde 3-phosphate and pyruvate: step 1/1. Its function is as follows. Catalyzes the acyloin condensation reaction between C atoms 2 and 3 of pyruvate and glyceraldehyde 3-phosphate to yield 1-deoxy-D-xylulose-5-phosphate (DXP). The protein is 1-deoxy-D-xylulose-5-phosphate synthase of Salmonella agona (strain SL483).